The following is a 670-amino-acid chain: MDSRNVLIIYAVNVERKLNAAAHHTSEYQTKKLVLRRGQIFTLKVILNRPLQPQDELKVTFTSGQRDPPYMVELDPVTSYRSKGWQVKIAKQSGVEVILNVISAADAVVGRYKMRVNEYKAGVFYLLFNPWCSDDSVFMASEEERAEYILNDTGYMYMGFAKQIKEKPWTFGQFEKHILSCCFNLLFQLENNEMQNPVLVSRAICTMMCAANGGVLMGNWTGDYADGTAPYVWTSSVPILQQHYVTRMPVRYGQCWVFSGILTTALRAVGIPARSVTNFESAHDTEKNLTVDIYLDESGKTIPHLTKDSVWNFHVWTDAWMKRQDLPHGYDGWQVLDSTPQEISDGGFRTGPSPLTAIRQGLIQMKYDTTFVFTEVNGDKFIWLVKQNQEREKNILIAVETASLGKKISTKMVGENRREDITLQYRFPEGSPEERKVMAKASGKPSDDKLNSRTLNNSLQISVLQNSLELGAPIYLTITLKRKTATPQNVNISCSLNLQTYTGNKKTNLGVIQKTVQIHGQESRVFLTMDASYYIYKLGMVDDEMVIGGFIIAEIVDSGERVATDTTLCFLYSAFSVEMPSTGKVKQPLVITSKFTNTLPIPLTNIKFSVESLGLANMKSWEQETVPPGKTITFQMECTPVKAGPQKFIVKFISRQVKEVHAEKVVLISK.

N-linked (GlcNAc...) asparagine glycans are attached at residues Asn-151 and Asn-219. Cys-255 is a catalytic residue. Residue Asn-288 is glycosylated (N-linked (GlcNAc...) asparagine). Catalysis depends on residues His-314 and Asp-337. 4 residues coordinate Ca(2+): Asn-377, Asp-379, Glu-429, and Glu-434. 2 N-linked (GlcNAc...) asparagine glycosylation sites follow: Asn-456 and Asn-491.

The protein belongs to the transglutaminase superfamily. Transglutaminase family. As to quaternary structure, homodimer. Requires Ca(2+) as cofactor. Expressed in the coagulating gland and in the dorsal part of the prostate. Not expressed in the brain, heart, kidney, liver, lung, muscle, pancreas, spleen, stomach, testis and thymus.

The protein localises to the secreted. It catalyses the reaction L-glutaminyl-[protein] + L-lysyl-[protein] = [protein]-L-lysyl-N(6)-5-L-glutamyl-[protein] + NH4(+). Associated with the mammalian reproductive process. Plays an important role in the formation of the seminal coagulum through the cross-linking of specific proteins present in the seminal plasma. Transglutaminase is also required to stabilize the copulatory plug. The chain is Protein-glutamine gamma-glutamyltransferase 4 from Mus musculus (Mouse).